Reading from the N-terminus, the 403-residue chain is Spindle assembly abnormal protein 5 (403 aa).

Disordered regions lie at residues 24-79 (PRVF…AHPA) and 96-127 (TVEG…ENWR). Basic and acidic residues predominate over residues 116 to 127 (RMTEENQEENWR). The stretch at 128 to 163 (DVMKNEFEVMRKEMQEEATKKQEELNAQNLNKMQEM) forms a coiled coil. 4 disordered regions span residues 174 to 205 (AKPS…ANKI), 255 to 276 (AYSP…SSGN), 302 to 325 (RQWT…PDPQ), and 355 to 403 (YHVE…SRRK). Basic and acidic residues predominate over residues 177-194 (SAEESQDREKENWYEQSR). A compositionally biased stretch (basic and acidic residues) spans 305–321 (TSERNDNRTHDNYRPYE). Positions 360 to 369 (VPEYEEEETE) are enriched in acidic residues. Basic and acidic residues predominate over residues 379–403 (YHEPMETESAAERERRIREKYSRRK).

Interacts with sas-6 via its coiled coil domain.

The protein localises to the cytoplasm. It localises to the cytoskeleton. It is found in the microtubule organizing center. Its subcellular location is the centrosome. The protein resides in the centriole. In terms of biological role, required for centrosome duplication. Essential for daughter-centriole formation. Requires both maternal and partenal expression, suggesting that it regulates centriole duplication during both spermatogenesis and early embryogenesis. The sequence is that of Spindle assembly abnormal protein 5 (sas-5) from Caenorhabditis briggsae.